The primary structure comprises 327 residues: MEGENSSIEKGLLLIRKEESANTTPFLVFTTFIIVSASFSFGVALGHTAGTMASIMEDLDLSITQFSVFGSLLTFGGMIGALFSATIADSFGCKMTLWITEVFCISGWLAIALAKNIIWLDLGRFFVGIGVGLLSYVVPVYIAEITPKTVRGTFTFSNQLLQNCGVATAYYLGNFMSWRIIALIGILPCLIQLVGLFFVPESPRWLAKEGRDEECEVVLQKLRGDEADIVKETQEILISVEASANISMRSLFKKKYTHQLTIGIGLMLLQQLSGSAGLGYYTGSVFDLAGFPSRIGMTVLSIVVVPKAILGLILVERWGRRPLLMVM.

The next 8 membrane-spanning stretches (helical) occupy residues 26-46 (FLVF…VALG), 68-88 (VFGS…ATIA), 102-122 (VFCI…WLDL), 125-145 (FFVG…IAEI), 152-172 (GTFT…AYYL), 180-200 (IIAL…FFVP), 260-280 (LTIG…GLGY), and 295-315 (IGMT…LILV).

Belongs to the major facilitator superfamily. Sugar transporter (TC 2.A.1.1) family.

It localises to the membrane. Functionally, sugar transporter. In Arabidopsis thaliana (Mouse-ear cress), this protein is Sugar transporter ERD6-like 9.